A 402-amino-acid chain; its full sequence is WAT1-related protein At5g07050 (402 aa).

The next 10 helical transmembrane spans lie at 20–40, 48–68, 74–94, 109–129, 149–169, 196–216, 229–249, 266–286, 293–313, and 318–338; these read FAMI…KISL, VLVV…AFFF, PKIT…GPVI, TFSC…AVLF, VVTV…VELF, FLKG…LFVL, LSLT…VTFV, LAAA…QGIV, VFAT…GSFV, and IFLG…AVLW. EamA domains are found at residues 29-159 and 208-337; these read YAGM…MLMT and LAWA…YAVL.

Belongs to the drug/metabolite transporter (DMT) superfamily. Plant drug/metabolite exporter (P-DME) (TC 2.A.7.4) family.

Its subcellular location is the membrane. The chain is WAT1-related protein At5g07050 from Arabidopsis thaliana (Mouse-ear cress).